Reading from the N-terminus, the 1758-residue chain is RanBP2-like and GRIP domain-containing protein 4 (1758 aa).

At serine 21 the chain carries Phosphoserine. TPR repeat units follow at residues 60–93 (PRAHRFLGLLYELEENTEKAVECYRRSVELNPTQ) and 584–617 (QKMGSGLNSFYDQREYIGRSVHYWKKVLPLLKII). The segment at 761 to 805 (DPLYKNGSLRNADSEIKHSTPSPTKYSLSPSKSYKYSPKTPPRWA) is disordered. Residues 779 to 798 (STPSPTKYSLSPSKSYKYSP) are compositionally biased toward low complexity. In terms of domain architecture, RanBD1 1 spans 1037–1173 (HFEPVVQMPE…FEECQQLLLD (137 aa)). Disordered regions lie at residues 1213–1249 (QTKVTEEENKGSGTGAAGASDTTIKPNPENTGPTLEW) and 1295–1332 (SFKSALSPSKSPAKLNQSGTSVGTDEESDVTQEEERDG). Polar residues predominate over residues 1236 to 1245 (IKPNPENTGP). Positions 1295–1309 (SFKSALSPSKSPAKL) are enriched in low complexity. The span at 1318–1330 (TDEESDVTQEEER) shows a compositional bias: acidic residues. The RanBD1 2 domain maps to 1334–1470 (YFEPVVPLPD…FDEAKTAQEK (137 aa)). Over residues 1583 to 1594 (SETSSVAQSGSE) the composition is skewed to polar residues. A disordered region spans residues 1583–1621 (SETSSVAQSGSESKVEPKKCELSKNSDIEQSSDSKVKNL). The segment covering 1595 to 1618 (SKVEPKKCELSKNSDIEQSSDSKV) has biased composition (basic and acidic residues). The region spanning 1703-1753 (QEESAANVEHLKNVLLQFIFLKPGSERERLLPVINTMLQLSPEEKGKLAAV) is the GRIP domain.

The sequence is that of RanBP2-like and GRIP domain-containing protein 4 (RGPD4) from Homo sapiens (Human).